The sequence spans 97 residues: Glutamyl-tRNA(Gln) amidotransferase subunit C (97 aa).

It belongs to the GatC family. As to quaternary structure, heterotrimer of A, B and C subunits.

The enzyme catalyses L-glutamyl-tRNA(Gln) + L-glutamine + ATP + H2O = L-glutaminyl-tRNA(Gln) + L-glutamate + ADP + phosphate + H(+). It catalyses the reaction L-aspartyl-tRNA(Asn) + L-glutamine + ATP + H2O = L-asparaginyl-tRNA(Asn) + L-glutamate + ADP + phosphate + 2 H(+). Functionally, allows the formation of correctly charged Asn-tRNA(Asn) or Gln-tRNA(Gln) through the transamidation of misacylated Asp-tRNA(Asn) or Glu-tRNA(Gln) in organisms which lack either or both of asparaginyl-tRNA or glutaminyl-tRNA synthetases. The reaction takes place in the presence of glutamine and ATP through an activated phospho-Asp-tRNA(Asn) or phospho-Glu-tRNA(Gln). The chain is Glutamyl-tRNA(Gln) amidotransferase subunit C from Sulfurisphaera tokodaii (strain DSM 16993 / JCM 10545 / NBRC 100140 / 7) (Sulfolobus tokodaii).